The following is a 362-amino-acid chain: P2Y purinoceptor 1 (362 aa).

The Extracellular segment spans residues 1–40 (MTEALISAALNGTQPELLAGGWAAGNATTKCSLTKTGFQF). Residues Asn-11 and Asn-26 are each glycosylated (N-linked (GlcNAc...) asparagine). 2 disulfides stabilise this stretch: Cys-31–Cys-285 and Cys-113–Cys-191. Lys-35 contacts ADP. Residues 41–63 (YYLPTVYILVFITGFLGNSVAIW) traverse the membrane as a helical segment. Residues 64–76 (MFVFHMRPWSGIS) are Cytoplasmic-facing. Residues 77 to 98 (VYMFNLALADFLYVLTLPALIF) traverse the membrane as a helical segment. Topologically, residues 99 to 114 (YYFNKTDWIFGDVMCK) are extracellular. Asn-102 is a glycosylation site (N-linked (GlcNAc...) asparagine). The helical transmembrane segment at 115–136 (LQRFIFHVNLYGSILFLTCISV) threads the bilayer. The Cytoplasmic portion of the chain corresponds to 137 to 155 (HRYTGVVHPLKSLGRLKKK). The chain crosses the membrane as a helical span at residues 156-177 (NAVYVSSLVWALVVAVIAPILF). The Extracellular portion of the chain corresponds to 178–203 (YSGTGVRRNKTITCYDTTADEYLRSY). An N-linked (GlcNAc...) asparagine glycan is attached at Asn-186. 192–194 (YDT) is a binding site for ADP. Residues 204–226 (FVYSMCTTVFMFCIPFIVILGCY) traverse the membrane as a helical segment. Topologically, residues 227–249 (GLIVKALIYKDLDNSPLRRKSIY) are cytoplasmic. A helical membrane pass occupies residues 250-273 (LVIIVLTVFAVSYLPFHVMKTLNL). Residues 272 to 276 (NLRAR), 292 to 295 (YATY), and Arg-299 each bind ADP. At 274 to 292 (RARLDFQTPQMCAFNDKVY) the chain is on the extracellular side. The chain crosses the membrane as a helical span at residues 293–314 (ATYQVTRGLASLNSCVDPILYF). The Cytoplasmic segment spans residues 315 to 362 (LAGDTFRRRLSRATRKSSRRSEPNVQSKSEEMTLNILTEYKQNGDTSL).

This sequence belongs to the G-protein coupled receptor 1 family. In terms of tissue distribution, brain, spinal cord, gastrointestinal tract, spleen and leg muscle. Is not detected in the heart, liver, stomach, lung and kidney.

It localises to the cell membrane. In terms of biological role, receptor for extracellular adenine nucleotides such as ADP. In platelets, binding to ADP leads to mobilization of intracellular calcium ions via activation of phospholipase C, a change in platelet shape, and ultimately platelet aggregation. In Gallus gallus (Chicken), this protein is P2Y purinoceptor 1 (P2RY1).